The primary structure comprises 191 residues: Protein GrpE (191 aa).

The protein belongs to the GrpE family. Homodimer.

The protein localises to the cytoplasm. Functionally, participates actively in the response to hyperosmotic and heat shock by preventing the aggregation of stress-denatured proteins, in association with DnaK and GrpE. It is the nucleotide exchange factor for DnaK and may function as a thermosensor. Unfolded proteins bind initially to DnaJ; upon interaction with the DnaJ-bound protein, DnaK hydrolyzes its bound ATP, resulting in the formation of a stable complex. GrpE releases ADP from DnaK; ATP binding to DnaK triggers the release of the substrate protein, thus completing the reaction cycle. Several rounds of ATP-dependent interactions between DnaJ, DnaK and GrpE are required for fully efficient folding. The chain is Protein GrpE from Listeria welshimeri serovar 6b (strain ATCC 35897 / DSM 20650 / CCUG 15529 / CIP 8149 / NCTC 11857 / SLCC 5334 / V8).